Here is a 388-residue protein sequence, read N- to C-terminus: P2X purinoceptor 4 (388 aa).

The Cytoplasmic portion of the chain corresponds to 1-33; it reads MAGCCAALAAFLFEYDTPRIVLIRSRKVGLMNR. The helical transmembrane segment at 34–54 threads the bilayer; the sequence is AVQLLILAYVIGWVFVWEKGY. Residues 55 to 338 lie on the Extracellular side of the membrane; the sequence is QETDSVVSSV…KFDIIPTMIN (284 aa). ATP is bound by residues lysine 67 and lysine 69. CTP contacts are provided by lysine 67 and lysine 69. 2 N-linked (GlcNAc...) asparagine glycosylation sites follow: asparagine 75 and asparagine 110. 3 disulfides stabilise this stretch: cysteine 116–cysteine 165, cysteine 126–cysteine 149, and cysteine 132–cysteine 159. Residues asparagine 153 and asparagine 184 are each glycosylated (N-linked (GlcNAc...) asparagine). 2 residues coordinate ATP: threonine 186 and leucine 188. CTP is bound at residue threonine 186. 2 N-linked (GlcNAc...) asparagine glycosylation sites follow: asparagine 199 and asparagine 208. Cystine bridges form between cysteine 217–cysteine 227 and cysteine 261–cysteine 270. 3 residues coordinate ATP: asparagine 293, arginine 295, and lysine 313. Positions 293, 295, and 313 each coordinate CTP. The chain crosses the membrane as a helical span at residues 339–359; sequence IGSGLALLGMATVLCDIIVLY. The Cytoplasmic portion of the chain corresponds to 360–388; it reads CMKKRLYYREKKYKYVEDYEQGLASELDQ.

The protein belongs to the P2X receptor family. As to quaternary structure, functional P2RXs are organized as homomeric and heteromeric trimers. Forms heterotrimer with P2RX1. Interacts with P2RX7 (via C-terminus); this interaction is functional only in the presence of ATP. Forms heterotrimer with P2RX4; functional differences between homomeric P2RX4 and P2RX4/6 heterotrimer are minor. Interacts with AP1M2.

Its subcellular location is the cell membrane. The protein resides in the lysosome membrane. The catalysed reaction is K(+)(in) = K(+)(out). The enzyme catalyses Na(+)(in) = Na(+)(out). It carries out the reaction Ca(2+)(in) = Ca(2+)(out). Activated by ATP. pH-dependent and inhibited by acidic pH. Functionally, ATP-gated nonselective transmembrane cation channel permeable to potassium, sodium and calcium. CTP, but not GTP or UTP, functions as a weak affinity agonist for P2RX4. Activated by extracellularly released ATP, it plays multiple role in immunity and central nervous system physiology. Plays a key role in initial steps of T-cell activation and Ca(2+) microdomain formation. Also participates in basal T-cell activity without TCR/CD3 stimulation. Promotes the differentiation and activation of Th17 cells via expression of retinoic acid-related orphan receptor C/RORC. Upon activation, drives microglia motility via the PI3K/Akt pathway. Could also function as an ATP-gated cation channel of lysosomal membranes. The protein is P2X purinoceptor 4 (P2RX4) of Homo sapiens (Human).